We begin with the raw amino-acid sequence, 263 residues long: Large ribosomal subunit protein uL23m (263 aa).

The transit peptide at M1–L45 directs the protein to the mitochondrion.

Belongs to the universal ribosomal protein uL23 family. Component of the mitochondrial large ribosomal subunit (mt-LSU). Mature yeast 74S mitochondrial ribosomes consist of a small (37S) and a large (54S) subunit. The 37S small subunit contains a 15S ribosomal RNA (15S mt-rRNA) and 34 different proteins. The 54S large subunit contains a 21S rRNA (21S mt-rRNA) and 46 different proteins. uL23m forms the wall of the exit tunnel. Interacts with the C-terminus of OXA1.

The protein localises to the mitochondrion. Its function is as follows. Component of the mitochondrial ribosome (mitoribosome), a dedicated translation machinery responsible for the synthesis of mitochondrial genome-encoded proteins, including at least some of the essential transmembrane subunits of the mitochondrial respiratory chain. The mitoribosomes are attached to the mitochondrial inner membrane and translation products are cotranslationally integrated into the membrane. In Saccharomyces cerevisiae (strain ATCC 204508 / S288c) (Baker's yeast), this protein is Large ribosomal subunit protein uL23m (MRP20).